The primary structure comprises 152 residues: Small ribosomal subunit protein uS19 (152 aa).

This sequence belongs to the universal ribosomal protein uS19 family.

Protein S19 forms a complex with S13 that binds strongly to the 16S ribosomal RNA. The polypeptide is Small ribosomal subunit protein uS19 (rps19) (Methanocaldococcus jannaschii (strain ATCC 43067 / DSM 2661 / JAL-1 / JCM 10045 / NBRC 100440) (Methanococcus jannaschii)).